The primary structure comprises 282 residues: Formamidopyrimidine-DNA glycosylase (282 aa).

Pro2 (schiff-base intermediate with DNA) is an active-site residue. Glu3 functions as the Proton donor in the catalytic mechanism. Lys60 acts as the Proton donor; for beta-elimination activity in catalysis. Positions 99, 118, and 163 each coordinate DNA. The FPG-type zinc finger occupies 248–282 (WVYGRTGEPCRVCGTSIERLKLGGRSAHFCPRCQA). The active-site Proton donor; for delta-elimination activity is Arg272.

It belongs to the FPG family. As to quaternary structure, monomer. It depends on Zn(2+) as a cofactor.

The enzyme catalyses Hydrolysis of DNA containing ring-opened 7-methylguanine residues, releasing 2,6-diamino-4-hydroxy-5-(N-methyl)formamidopyrimidine.. The catalysed reaction is 2'-deoxyribonucleotide-(2'-deoxyribose 5'-phosphate)-2'-deoxyribonucleotide-DNA = a 3'-end 2'-deoxyribonucleotide-(2,3-dehydro-2,3-deoxyribose 5'-phosphate)-DNA + a 5'-end 5'-phospho-2'-deoxyribonucleoside-DNA + H(+). In terms of biological role, involved in base excision repair of DNA damaged by oxidation or by mutagenic agents. Acts as a DNA glycosylase that recognizes and removes damaged bases. Has a preference for oxidized purines, such as 7,8-dihydro-8-oxoguanine (8-oxoG). Has AP (apurinic/apyrimidinic) lyase activity and introduces nicks in the DNA strand. Cleaves the DNA backbone by beta-delta elimination to generate a single-strand break at the site of the removed base with both 3'- and 5'-phosphates. This Rippkaea orientalis (strain PCC 8801 / RF-1) (Cyanothece sp. (strain PCC 8801)) protein is Formamidopyrimidine-DNA glycosylase.